A 173-amino-acid polypeptide reads, in one-letter code: bZIP transcription factor 44 (173 aa).

The segment at methionine 1 to aspartate 65 is disordered. Positions glycine 8–glycine 22 are enriched in low complexity. A compositionally biased stretch (basic and acidic residues) spans serine 30–arginine 41. Positions aspartate 39–leucine 102 constitute a bZIP domain. A basic motif region spans residues arginine 41–lysine 62. The segment at leucine 67 to isoleucine 81 is leucine-zipper.

In terms of assembly, forms heterodimers with BZIP1, BZIP9, BZIP10, BZIP25 and BZIP63. Expressed in the micropylar endosperm and radicle tip in early germinating seeds.

It is found in the nucleus. Functionally, transcription factor that binds to the DNA G-box motif 5'-CACGTG-3' of MAN7 promoter. Involved in the positive regulation of seed germination through MAN7 gene activation. MAN7 is required for both, loosening of the micropylar endosperm, and rupture of the seed coat in germinating seeds. This Arabidopsis thaliana (Mouse-ear cress) protein is bZIP transcription factor 44.